Here is a 238-residue protein sequence, read N- to C-terminus: Uridylate kinase (238 aa).

12-15 (KLSG) provides a ligand contact to ATP. Gly54 provides a ligand contact to UMP. Residues Gly55 and Arg59 each coordinate ATP. Residues Asp74 and 135-142 (TGNPFFTT) contribute to the UMP site. Positions 162, 168, and 171 each coordinate ATP.

Belongs to the UMP kinase family. In terms of assembly, homohexamer.

It is found in the cytoplasm. It carries out the reaction UMP + ATP = UDP + ADP. It functions in the pathway pyrimidine metabolism; CTP biosynthesis via de novo pathway; UDP from UMP (UMPK route): step 1/1. Inhibited by UTP. Its function is as follows. Catalyzes the reversible phosphorylation of UMP to UDP. This chain is Uridylate kinase, found in Dechloromonas aromatica (strain RCB).